A 716-amino-acid chain; its full sequence is MDTKKIFKHIPWVILGIIGAFCLAVVALRRGEHISALWIVVASVSVYLVAYRYYSLYIAQKVMKLDPTRATPAVINNDGLNYVPTNRYVLFGHHFAAIAGAGPLVGPVLAAQMGYLPGTLWLLAGVVLAGAVQDFMVLFISSRRNGASLGEMIKEEMGPVPGTIALFGCFLIMIIILAVLALIVVKALAESPWGVFTVCSTVPIALFMGIYMRFIRPGRVGEVSVIGIVLLVASIYFGGVIAHDPYWGPALTFKDTTITFALIGYAFVSALLPVWLILAPRDYLATFLKIGVIVGLALGIVVLNPELKMPAMTQYIDGTGPLWKGALFPFLFITIACGAVSGFHALISSGTTPKLLANETDARFIGYGAMLMESFVAIMALVAASIIEPGLYFAMNTPPAGLGITMPNLHEMGGENAPIIMAQLKDVTAHAAATVSSWGFVISPEQILQTAKDIGEPSVLNRAGGAPTLAVGIAHVFHKVLPMADMGFWYHFGILFEALFILTALDAGTRSGRFMLQDLLGNFIPFLKKTDSLVAGIIGTAGCVGLWGYLLYQGVVDPLGGVKSLWPLFGISNQMLAAVALVLGTVVLIKMKRTQYIWVTVVPAVWLLICTTWALGLKLFSTNPQMEGFFYMASQYKEKIANGTDLTAQQIANMNHIVVNNYTNAGLSILFLIVVYSIIFYGFKTWLAVRNSDKRTDKETPYVPIPEGGVKISSHH.

Residues 1-5 lie on the Cytoplasmic side of the membrane; the sequence is MDTKK. The chain crosses the membrane as a helical span at residues 6-26; that stretch reads IFKHIPWVILGIIGAFCLAVV. Residues 27-30 are Periplasmic-facing; sequence ALRR. The helical transmembrane segment at 31–51 threads the bilayer; that stretch reads GEHISALWIVVASVSVYLVAY. At 52–88 the chain is on the cytoplasmic side; sequence RYYSLYIAQKVMKLDPTRATPAVINNDGLNYVPTNRY. A helical membrane pass occupies residues 89 to 109; the sequence is VLFGHHFAAIAGAGPLVGPVL. The Periplasmic portion of the chain corresponds to 110-119; it reads AAQMGYLPGT. The chain crosses the membrane as a helical span at residues 120 to 140; that stretch reads LWLLAGVVLAGAVQDFMVLFI. Topologically, residues 141-163 are cytoplasmic; it reads SSRRNGASLGEMIKEEMGPVPGT. A helical membrane pass occupies residues 164-184; sequence IALFGCFLIMIIILAVLALIV. Over 185-191 the chain is Periplasmic; sequence VKALAES. The helical transmembrane segment at 192–212 threads the bilayer; sequence PWGVFTVCSTVPIALFMGIYM. The Cytoplasmic segment spans residues 213–222; sequence RFIRPGRVGE. A helical membrane pass occupies residues 223–243; it reads VSVIGIVLLVASIYFGGVIAH. Residues 244-257 lie on the Periplasmic side of the membrane; the sequence is DPYWGPALTFKDTT. The chain crosses the membrane as a helical span at residues 258–278; that stretch reads ITFALIGYAFVSALLPVWLIL. Over 279 to 282 the chain is Cytoplasmic; the sequence is APRD. The helical transmembrane segment at 283–303 threads the bilayer; that stretch reads YLATFLKIGVIVGLALGIVVL. Residues 304–326 lie on the Periplasmic side of the membrane; the sequence is NPELKMPAMTQYIDGTGPLWKGA. A helical transmembrane segment spans residues 327–347; the sequence is LFPFLFITIACGAVSGFHALI. Residues 348-374 lie on the Cytoplasmic side of the membrane; sequence SSGTTPKLLANETDARFIGYGAMLMES. Residues 375–395 form a helical membrane-spanning segment; the sequence is FVAIMALVAASIIEPGLYFAM. Over 396–484 the chain is Periplasmic; the sequence is NTPPAGLGIT…HVFHKVLPMA (89 aa). The chain crosses the membrane as a helical span at residues 485 to 505; it reads DMGFWYHFGILFEALFILTAL. Residues 506–531 are Cytoplasmic-facing; the sequence is DAGTRSGRFMLQDLLGNFIPFLKKTD. A helical membrane pass occupies residues 532 to 552; it reads SLVAGIIGTAGCVGLWGYLLY. Residues 553–568 are Periplasmic-facing; that stretch reads QGVVDPLGGVKSLWPL. A helical transmembrane segment spans residues 569-589; the sequence is FGISNQMLAAVALVLGTVVLI. Residues 590–596 lie on the Cytoplasmic side of the membrane; sequence KMKRTQY. The helical transmembrane segment at 597–617 threads the bilayer; the sequence is IWVTVVPAVWLLICTTWALGL. The Periplasmic segment spans residues 618–668; that stretch reads KLFSTNPQMEGFFYMASQYKEKIANGTDLTAQQIANMNHIVVNNYTNAGLS. A helical membrane pass occupies residues 669 to 689; the sequence is ILFLIVVYSIIFYGFKTWLAV. The Cytoplasmic segment spans residues 690–716; sequence RNSDKRTDKETPYVPIPEGGVKISSHH. A disordered region spans residues 696-716; sequence TDKETPYVPIPEGGVKISSHH.

It belongs to the peptide transporter carbon starvation (CstA) (TC 2.A.114) family. In terms of assembly, interacts with BtsS and YpdA.

The protein resides in the cell inner membrane. The enzyme catalyses pyruvate(out) + H(+)(out) = pyruvate(in) + H(+)(in). With respect to regulation, transport is inhibited by the protonophores 2,4-dinitrophenol (DNP) and carbonyl cyanide m-chlorophenyl hydrazone (CCCP), but not by ionophores such as valinomycin, nonactin and nigericin. Functionally, transports pyruvate with a high affinity and specificity. The process is driven by the proton motive force. Under nutrient limiting conditions, mediates the uptake of pyruvate, thus enabling it to be used as a carbon source for the growth and survival. Part of a nutrient-sensing regulatory network composed of the two-component regulatory systems BtsS/BtsR and YpdA/YpdB, and their respective target proteins, BtsT and YhjX. The protein is Pyruvate/proton symporter BtsT of Escherichia coli (strain K12).